Here is a 141-residue protein sequence, read N- to C-terminus: Putative nickel-responsive regulator (141 aa).

H80, H91, H93, and C99 together coordinate Ni(2+).

The protein belongs to the transcriptional regulatory CopG/NikR family. Ni(2+) serves as cofactor.

Transcriptional regulator. The chain is Putative nickel-responsive regulator from Methanococcus vannielii (strain ATCC 35089 / DSM 1224 / JCM 13029 / OCM 148 / SB).